Here is a 323-residue protein sequence, read N- to C-terminus: Fructose-1,6-bisphosphatase class 1 (323 aa).

Residues Glu84, Asp103, Leu105, and Asp106 each contribute to the Mg(2+) site. Substrate contacts are provided by residues 106-109 (DGSS), Asn198, and Lys264. Mg(2+) is bound at residue Glu270.

Belongs to the FBPase class 1 family. As to quaternary structure, homotetramer. Mg(2+) is required as a cofactor.

The protein resides in the cytoplasm. The enzyme catalyses beta-D-fructose 1,6-bisphosphate + H2O = beta-D-fructose 6-phosphate + phosphate. It functions in the pathway carbohydrate biosynthesis; gluconeogenesis. The sequence is that of Fructose-1,6-bisphosphatase class 1 from Hydrogenovibrio crunogenus (strain DSM 25203 / XCL-2) (Thiomicrospira crunogena).